Consider the following 364-residue polypeptide: Cobalt-precorrin-5B C(1)-methyltransferase (364 aa).

This sequence belongs to the CbiD family.

It carries out the reaction Co-precorrin-5B + S-adenosyl-L-methionine = Co-precorrin-6A + S-adenosyl-L-homocysteine. The protein operates within cofactor biosynthesis; adenosylcobalamin biosynthesis; cob(II)yrinate a,c-diamide from sirohydrochlorin (anaerobic route): step 6/10. Its function is as follows. Catalyzes the methylation of C-1 in cobalt-precorrin-5B to form cobalt-precorrin-6A. This Pseudomonas putida (strain ATCC 47054 / DSM 6125 / CFBP 8728 / NCIMB 11950 / KT2440) protein is Cobalt-precorrin-5B C(1)-methyltransferase.